An 828-amino-acid chain; its full sequence is Class I hydrophobin hum3 (828 aa).

The signal sequence occupies residues 1-22 (MKYLQFLAAVAAVSAFSGPVLA). N-linked (GlcNAc...) asparagine glycosylation is found at asparagine 156, asparagine 222, and asparagine 738. 4 cysteine pairs are disulfide-bonded: cysteine 750/cysteine 808, cysteine 757/cysteine 802, cysteine 758/cysteine 788, and cysteine 809/cysteine 822. Residue asparagine 811 is glycosylated (N-linked (GlcNAc...) asparagine).

In the C-terminal section; belongs to the fungal hydrophobin family. As to quaternary structure, self-assembles to form functional amyloid fibrils called rodlets. Self-assembly into fibrillar rodlets occurs spontaneously at hydrophobic:hydrophilic interfaces and the rodlets further associate laterally to form amphipathic monolayers. Hum3 is an atypical hydrophobin that consists in a repetitive repellent-like region that spans 578 aa which is separated from a hydrophobin-like domain by a spacer region containing three possible kex2 processing sites. The repetitive region contains 17 amphipathic repeats of 31-36 aa each of them with a C-terminal putative kex2 processing motif.

Its subcellular location is the secreted. The protein localises to the cell wall. Functionally, aerial growth, conidiation, and dispersal of filamentous fungi in the environment rely upon a capability of their secreting small amphipathic proteins called hydrophobins (HPBs) with low sequence identity. Class I can self-assemble into an outermost layer of rodlet bundles on aerial cell surfaces, conferring cellular hydrophobicity that supports fungal growth, development and dispersal; whereas Class II form highly ordered films at water-air interfaces through intermolecular interactions but contribute nothing to the rodlet structure. Atypical class I hydrophobin that is preceded by a signal sequence and 17 imperfect repeats. The repeated peptides might function as repellents whereas the class I hydrophobin seems not to be crucial for the formation of aerial hyphae. Hydrophobins of Mycosarcoma maydis have been functionally replaced, at least partially, by repellents. Hum3 and rsp1 together are pathogenicity proteins that share an essential function in early stages of the infection. The polypeptide is Class I hydrophobin hum3 (Mycosarcoma maydis (Corn smut fungus)).